Here is a 499-residue protein sequence, read N- to C-terminus: Spore germination protein GerQA (499 aa).

A run of 3 helical transmembrane segments spans residues 285 to 305 (LFAF…LTYH), 376 to 396 (SNVL…APIY), and 409 to 429 (FIIS…SLLL).

It belongs to the GerABKA family.

The protein localises to the membrane. In terms of biological role, required for the germination response to inosine. Has no role in L-alanine germination. This chain is Spore germination protein GerQA (gerQA), found in Bacillus cereus.